A 230-amino-acid polypeptide reads, in one-letter code: Probable fimbrial chaperone SfmC (230 aa).

The first 23 residues, 1 to 23, serve as a signal peptide directing secretion; sequence MMTKIKLLMLIIFYLIISASAHA.

This sequence belongs to the periplasmic pilus chaperone family.

It is found in the periplasm. In terms of biological role, part of the sfmACDHF fimbrial operon. Could contribute to adhesion to various surfaces in specific environmental niches. Increases adhesion to eukaryotic T24 bladder epithelial cells in the absence of fim genes. This chain is Probable fimbrial chaperone SfmC (sfmC), found in Escherichia coli (strain K12).